The chain runs to 1161 residues: Nuclear receptor-interacting protein 1 (1161 aa).

An interaction with ZNF366 region spans residues Met-1 to Asp-416. Positions Leu-21–Leu-25 match the LXXLL motif 1 motif. The tract at residues Gly-34–Val-68 is disordered. Polar residues predominate over residues Asn-50–Val-68. The tract at residues Met-78–Ala-335 is repression domain 1. Ser-104 is subject to Phosphoserine. N6-acetyllysine; alternate is present on Lys-111. Lys-111 is covalently cross-linked (Glycyl lysine isopeptide (Lys-Gly) (interchain with G-Cter in SUMO2); alternate). The short motif at Leu-133–Leu-137 is the LXXLL motif 2 element. At Lys-158 the chain carries N6-acetyllysine. A Glycyl lysine isopeptide (Lys-Gly) (interchain with G-Cter in SUMO2) cross-link involves residue Lys-170. Residues Leu-185–Leu-189 carry the LXXLL motif 3 motif. Glycyl lysine isopeptide (Lys-Gly) (interchain with G-Cter in SUMO2) cross-links involve residues Lys-195 and Lys-198. The residue at position 207 (Thr-207) is a Phosphothreonine. Ser-218 is subject to Phosphoserine. The short motif at Leu-267 to Leu-271 is the LXXLL motif 4 element. 2 positions are modified to N6-acetyllysine: Lys-287 and Lys-311. Ser-358 is subject to Phosphoserine. Lys-374 is covalently cross-linked (Glycyl lysine isopeptide (Lys-Gly) (interchain with G-Cter in SUMO2)). Ser-380 carries the phosphoserine modification. The LXXLL motif 5 signature appears at Leu-382 to Leu-386. The tract at residues Thr-393–Tyr-436 is disordered. Positions Thr-411 to Gly-701 are repression domain 2. The required for targeting to small nuclear foci stretch occupies residues Asp-432–Asp-473. Positions Pro-441 to Lys-447 match the CTBP-binding; principal site motif. 2 positions are modified to N6-acetyllysine: Lys-447 and Lys-482. The residue at position 488 (Ser-488) is a Phosphoserine. Positions Leu-501 to Leu-505 match the LXXLL motif 6 motif. Lys-509 is covalently cross-linked (Glycyl lysine isopeptide (Lys-Gly) (interchain with G-Cter in SUMO2)). The span at Asn-517–Val-552 shows a compositional bias: polar residues. The tract at residues Asn-517 to Thr-559 is disordered. Phosphoserine is present on Ser-519. Lys-529 carries the N6-acetyllysine modification. Phosphoserine occurs at positions 531, 543, and 565. The CTBP-binding signature appears at Pro-566–Ser-570. Disordered regions lie at residues Thr-604 to Ser-623, Gly-639 to Cys-702, and Leu-717 to Ala-747. Lys-607 carries the N6-acetyllysine modification. A Phosphoserine modification is found at Ser-672. The LXXLL motif 7 motif lies at Leu-714–Leu-718. Basic and acidic residues predominate over residues Gly-724–Ala-747. Positions Asp-736–Ser-886 are repression domain 3. Residues Val-754 to Glu-1161 form an interaction with ZNF366 region. Glycyl lysine isopeptide (Lys-Gly) (interchain with G-Cter in SUMO2) cross-links involve residues Lys-757 and Lys-803. A Phosphoserine modification is found at Ser-808. The short motif at Leu-820–Leu-824 is the LXXLL motif 8 element. The segment at Glu-829–Leu-848 is disordered. Glycyl lysine isopeptide (Lys-Gly) (interchain with G-Cter in SUMO2) cross-links involve residues Lys-851 and Lys-902. Lys-932 is modified (N6-acetyllysine; alternate). Lys-932 participates in a covalent cross-link: Glycyl lysine isopeptide (Lys-Gly) (interchain with G-Cter in SUMO2); alternate. The short motif at Leu-937 to Leu-941 is the LXXLL motif 9 element. Positions Val-947–Ser-951 match the CTBP-binding motif. Over residues Leu-950–Lys-962 the composition is skewed to basic and acidic residues. The segment at Leu-950–Glu-976 is disordered. Ser-1003 is subject to Phosphoserine. The interval Leu-1063–Lys-1076 is ligand-dependent nuclear receptor binding. Glycyl lysine isopeptide (Lys-Gly) (interchain with G-Cter in SUMO2) cross-links involve residues Lys-1108, Lys-1118, and Lys-1157. Residues Phe-1121 to Glu-1161 are repression domain 4.

In terms of assembly, interacts with CTBP1, CTBP2, ERS1, HDAC1, HDAC2, HDAC5, HDAC6, NR2C2, NR3C1, NR3C2, YWHAH, JUN and FOS. Found in a complex with both NR3C1 and YWHAH. Interacts with NR2C1 (sumoylated form and via the ligand-binding domain); the interaction results in promoting the repressor activity of NR2C1. Interacts with RARA and RXRB homodimers and RARA/RXRB heterodimers in the presence of ligand. Interacts with HDAC1 and HDAC3 via its N-terminal domain. Interacts with ZNF366. Interacts with RORA. Acetylation abolishes interaction with CTBP1. Phosphorylation enhances interaction with YWHAH. Acetylation regulates its nuclear translocation and corepressive activity. As to expression, expressed in the embryonic placenta. In the adult, expression is strong in the testis and brain. Also expressed at a high level in the white adipose tissue. Expressed constantly but at a weaker level in the adult heart, lung, stomach and kidney. Expressed moderately in the skeletal muscle. Expressed at a low level in the adult spleen, liver and brown adipose tissue. Expressed in the ovary at a high level in granulosa cells and at a lower level in the thecal and interstitial compartments.

The protein resides in the nucleus. Modulates transcriptional repression by nuclear hormone receptors such as NR2C1, thyroid hormone receptor and retinoic acid receptor/RARA. Essential for cumulus expansion and follicle rupture during ovulation. Also controls the balance between fat accumulation and energy expenditure. Positive regulator of the circadian clock gene expression: stimulates transcription of BMAL1, CLOCK and CRY1 by acting as a coactivator for RORA and RORC. Involved in the regulation of ovarian function. Plays a role in renal development. The chain is Nuclear receptor-interacting protein 1 from Mus musculus (Mouse).